The following is an 82-amino-acid chain: RNA-binding protein GK0100 (82 aa).

Belongs to the eukaryotic ribosomal protein eL8 family.

This Geobacillus kaustophilus (strain HTA426) protein is RNA-binding protein GK0100.